We begin with the raw amino-acid sequence, 1027 residues long: D-2-hydroxyglutarate dehydrogenase (1027 aa).

The 237-residue stretch at 48–284 (YQQLPQAILF…CEAKLNLLLI (237 aa)) folds into the FAD-binding PCMH-type domain. (R)-2-hydroxyglutarate is bound by residues arginine 405 and histidine 503. Residues 665–696 (HEVKAAMDTCLACKACASQCPIKIDVPSFRAK) form the 4Fe-4S ferredoxin-type domain. 4 residues coordinate [4Fe-4S] cluster: cysteine 674, cysteine 677, cysteine 680, and cysteine 684.

This sequence in the N-terminal section; belongs to the FAD-binding oxidoreductase/transferase type 4 family. In terms of assembly, homotetramer. It depends on [4Fe-4S] cluster as a cofactor. FAD serves as cofactor.

It carries out the reaction (R)-2-hydroxyglutarate + A = 2-oxoglutarate + AH2. Functionally, catalyzes the oxidation of D-2-hydroxyglutarate (D-2-HGA) to 2-oxoglutarate. Provides the way to recycle D-2-HGA produced during L-serine synthesis by SerA, by converting it back to 2-oxoglutarate. The physiological molecule that functions as the primary electron acceptor during D-2-HGA oxidation is unknown. The polypeptide is D-2-hydroxyglutarate dehydrogenase (Haemophilus influenzae (strain ATCC 51907 / DSM 11121 / KW20 / Rd)).